The sequence spans 255 residues: tRNA1(Val) (adenine(37)-N6)-methyltransferase (255 aa).

It belongs to the methyltransferase superfamily. tRNA (adenine-N(6)-)-methyltransferase family.

It localises to the cytoplasm. It catalyses the reaction adenosine(37) in tRNA1(Val) + S-adenosyl-L-methionine = N(6)-methyladenosine(37) in tRNA1(Val) + S-adenosyl-L-homocysteine + H(+). Specifically methylates the adenine in position 37 of tRNA(1)(Val) (anticodon cmo5UAC). The sequence is that of tRNA1(Val) (adenine(37)-N6)-methyltransferase from Porphyromonas gingivalis (strain ATCC 33277 / DSM 20709 / CIP 103683 / JCM 12257 / NCTC 11834 / 2561).